The primary structure comprises 259 residues: Flagellar brake protein YcgR (259 aa).

A PilZ domain is found at 129–246 (QRREFYRLQT…DNAIQRYIFK (118 aa)).

It belongs to the YcgR family. As to quaternary structure, monomer. Interacts with the flagellar basal bodies.

It is found in the bacterial flagellum basal body. In terms of biological role, acts as a flagellar brake, regulating swimming and swarming in a bis-(3'-5') cyclic diguanylic acid (c-di-GMP)-dependent manner. Binds 1 c-di-GMP dimer per subunit. Increasing levels of c-di-GMP lead to decreased motility. The sequence is that of Flagellar brake protein YcgR from Azoarcus sp. (strain BH72).